The following is a 176-amino-acid chain: NADH-quinone oxidoreductase subunit B 1 (176 aa).

Positions 55, 56, 120, and 150 each coordinate [4Fe-4S] cluster.

It belongs to the complex I 20 kDa subunit family. NDH-1 is composed of 14 different subunits. Subunits NuoB, C, D, E, F, and G constitute the peripheral sector of the complex. Requires [4Fe-4S] cluster as cofactor.

The protein localises to the cell inner membrane. The enzyme catalyses a quinone + NADH + 5 H(+)(in) = a quinol + NAD(+) + 4 H(+)(out). NDH-1 shuttles electrons from NADH, via FMN and iron-sulfur (Fe-S) centers, to quinones in the respiratory chain. Couples the redox reaction to proton translocation (for every two electrons transferred, four hydrogen ions are translocated across the cytoplasmic membrane), and thus conserves the redox energy in a proton gradient. In Cereibacter sphaeroides (strain ATCC 17029 / ATH 2.4.9) (Rhodobacter sphaeroides), this protein is NADH-quinone oxidoreductase subunit B 1.